Reading from the N-terminus, the 148-residue chain is NADH-quinone oxidoreductase subunit K 2 (148 aa).

The next 3 membrane-spanning stretches (helical) occupy residues 3–23 (LAYPAVLAALLFCVGLYGVLA), 28–48 (ILVLMSVELMLNAVNLNLVAF), and 64–84 (LFTIAIAAAEIGIGLAIVLAV). The segment at 96–148 (LRDTAETDAAETLPDDAGTGPSGTDAAPNGDTTTATGRPGDNAGKNKKAEATR) is disordered.

The protein belongs to the complex I subunit 4L family. In terms of assembly, NDH-1 is composed of 14 different subunits. Subunits NuoA, H, J, K, L, M, N constitute the membrane sector of the complex.

Its subcellular location is the cell membrane. The catalysed reaction is a quinone + NADH + 5 H(+)(in) = a quinol + NAD(+) + 4 H(+)(out). In terms of biological role, NDH-1 shuttles electrons from NADH, via FMN and iron-sulfur (Fe-S) centers, to quinones in the respiratory chain. The immediate electron acceptor for the enzyme in this species is believed to be a menaquinone. Couples the redox reaction to proton translocation (for every two electrons transferred, four hydrogen ions are translocated across the cytoplasmic membrane), and thus conserves the redox energy in a proton gradient. In Streptomyces griseus subsp. griseus (strain JCM 4626 / CBS 651.72 / NBRC 13350 / KCC S-0626 / ISP 5235), this protein is NADH-quinone oxidoreductase subunit K 2.